A 378-amino-acid polypeptide reads, in one-letter code: Ribosomal RNA large subunit methyltransferase G (378 aa).

This sequence belongs to the methyltransferase superfamily. RlmG family.

Its subcellular location is the cytoplasm. It catalyses the reaction guanosine(1835) in 23S rRNA + S-adenosyl-L-methionine = N(2)-methylguanosine(1835) in 23S rRNA + S-adenosyl-L-homocysteine + H(+). Specifically methylates the guanine in position 1835 (m2G1835) of 23S rRNA. The chain is Ribosomal RNA large subunit methyltransferase G from Escherichia coli O157:H7.